The following is a 597-amino-acid chain: Elongation factor 4 (597 aa).

In terms of domain architecture, tr-type G spans 2–184 (QHIRNFSIIA…AIVARVPSPE (183 aa)). GTP contacts are provided by residues 14-19 (DHGKST) and 131-134 (NKMD).

This sequence belongs to the TRAFAC class translation factor GTPase superfamily. Classic translation factor GTPase family. LepA subfamily.

It localises to the cell inner membrane. The enzyme catalyses GTP + H2O = GDP + phosphate + H(+). Required for accurate and efficient protein synthesis under certain stress conditions. May act as a fidelity factor of the translation reaction, by catalyzing a one-codon backward translocation of tRNAs on improperly translocated ribosomes. Back-translocation proceeds from a post-translocation (POST) complex to a pre-translocation (PRE) complex, thus giving elongation factor G a second chance to translocate the tRNAs correctly. Binds to ribosomes in a GTP-dependent manner. In Bordetella avium (strain 197N), this protein is Elongation factor 4.